The chain runs to 396 residues: Purine ribonucleoside efflux pump NepI (396 aa).

Over 1–21 the chain is Cytoplasmic; the sequence is MSEFIAENRGADAITRPNWSA. A helical membrane pass occupies residues 22–42; sequence VFSVAFCVACLIIVEFLPVSL. Over 43-54 the chain is Periplasmic; sequence LTPMAQDLGISE. Residues 55-75 traverse the membrane as a helical segment; sequence GVAGQSVTVTAFVAMFASLFI. Residues 76–85 lie on the Cytoplasmic side of the membrane; that stretch reads TQTIQATDRR. A helical membrane pass occupies residues 86 to 106; the sequence is YVVILFAVLLTLSCLLVSFAN. A topological domain (periplasmic) is located at residue Ser-107. A helical membrane pass occupies residues 108–128; that stretch reads FSLLLIGRACLGLALGGFWAM. Residues 129–147 are Cytoplasmic-facing; that stretch reads SASLTMRLVPPRTVPKALS. The chain crosses the membrane as a helical span at residues 148-168; that stretch reads VIFGAVSIALVIAAPLGSFLG. Residues 169 to 175 lie on the Periplasmic side of the membrane; the sequence is ELIGWRN. A helical membrane pass occupies residues 176 to 196; it reads VFNAAAAMGVLCIFWIIKSLP. Residues 197 to 215 are Cytoplasmic-facing; the sequence is SLPGEPSHQKQNTFRLLQR. Residues 216–236 traverse the membrane as a helical segment; the sequence is PGVMAGMIAIFMSFAGQFAFF. Topologically, residues 237–255 are periplasmic; it reads TYIRPVYMNLAGFGVDGLT. The chain crosses the membrane as a helical span at residues 256–276; it reads LVLLSFGIASFVGTSLSSFIL. The Cytoplasmic segment spans residues 277–281; it reads KRSVK. Residues 282 to 302 form a helical membrane-spanning segment; it reads LALAGAPFVLALSALVLTLWG. Residues 303–305 are Periplasmic-facing; that stretch reads SDK. The helical transmembrane segment at 306 to 326 threads the bilayer; it reads IVATGVAIIWGLTFALIPVGW. The Cytoplasmic portion of the chain corresponds to 327–343; sequence STWITRSLADQAEKAGS. Residues 344-364 form a helical membrane-spanning segment; sequence IQVAVIQLANTCGAAIGGYAL. Over 365 to 366 the chain is Periplasmic; it reads DN. A helical membrane pass occupies residues 367–387; the sequence is IGLTSPLMLSGTLMLLTALLV. Topologically, residues 388–396 are cytoplasmic; it reads TAKVKMKKS.

It belongs to the major facilitator superfamily. DHA1 family. NepI (TC 2.A.1.2.26) subfamily.

Its subcellular location is the cell inner membrane. It catalyses the reaction inosine(in) + H(+)(out) = inosine(out) + H(+)(in). The enzyme catalyses guanosine(in) + H(+)(out) = guanosine(out) + H(+)(in). Its function is as follows. Involved in the efflux of purine ribonucleosides, such as inosine and guanosine. The polypeptide is Purine ribonucleoside efflux pump NepI (Escherichia coli O1:K1 / APEC).